We begin with the raw amino-acid sequence, 205 residues long: Holliday junction branch migration complex subunit RuvA (205 aa).

The domain I stretch occupies residues 1-64 (MIGRIRGLLI…EDAQLLYGFI (64 aa)). A domain II region spans residues 65–143 (SKQERSLFRL…SLMEASVGSE (79 aa)). The flexible linker stretch occupies residues 144-156 (REFMLQSNYTAPE). The segment at 157–205 (AVNTAEEDAIAALLSLGYKPAQASKAVSSVYTDGMSSETLIKSALKSML) is domain III.

Belongs to the RuvA family. In terms of assembly, homotetramer. Forms an RuvA(8)-RuvB(12)-Holliday junction (HJ) complex. HJ DNA is sandwiched between 2 RuvA tetramers; dsDNA enters through RuvA and exits via RuvB. An RuvB hexamer assembles on each DNA strand where it exits the tetramer. Each RuvB hexamer is contacted by two RuvA subunits (via domain III) on 2 adjacent RuvB subunits; this complex drives branch migration. In the full resolvosome a probable DNA-RuvA(4)-RuvB(12)-RuvC(2) complex forms which resolves the HJ.

It is found in the cytoplasm. Its function is as follows. The RuvA-RuvB-RuvC complex processes Holliday junction (HJ) DNA during genetic recombination and DNA repair, while the RuvA-RuvB complex plays an important role in the rescue of blocked DNA replication forks via replication fork reversal (RFR). RuvA specifically binds to HJ cruciform DNA, conferring on it an open structure. The RuvB hexamer acts as an ATP-dependent pump, pulling dsDNA into and through the RuvAB complex. HJ branch migration allows RuvC to scan DNA until it finds its consensus sequence, where it cleaves and resolves the cruciform DNA. In Shewanella halifaxensis (strain HAW-EB4), this protein is Holliday junction branch migration complex subunit RuvA.